The chain runs to 180 residues: Adenine phosphoribosyltransferase (180 aa).

Ser-2 carries the N-acetylserine modification. Phosphoserine occurs at positions 15 and 30. Phosphotyrosine is present on Tyr-60. The residue at position 66 (Ser-66) is a Phosphoserine. Lys-114 carries the post-translational modification N6-acetyllysine. Thr-135 is modified (phosphothreonine).

The protein belongs to the purine/pyrimidine phosphoribosyltransferase family. Homodimer.

The protein localises to the cytoplasm. The enzyme catalyses AMP + diphosphate = 5-phospho-alpha-D-ribose 1-diphosphate + adenine. The protein operates within purine metabolism; AMP biosynthesis via salvage pathway; AMP from adenine: step 1/1. Its function is as follows. Catalyzes a salvage reaction resulting in the formation of AMP, that is energically less costly than de novo synthesis. The polypeptide is Adenine phosphoribosyltransferase (Stochomys longicaudatus (Target rat)).